An 88-amino-acid chain; its full sequence is Beta-defensin 115 (88 aa).

The N-terminal stretch at 1 to 27 (MLPDHFSPLSGDIKLSVLALVVLVVLA) is a signal peptide. 3 cysteine pairs are disulfide-bonded: C38–C65, C45–C59, and C49–C66.

It belongs to the beta-defensin family.

It is found in the secreted. Has antibacterial activity. The sequence is that of Beta-defensin 115 (DEFB115) from Homo sapiens (Human).